A 496-amino-acid polypeptide reads, in one-letter code: Glutamyl-tRNA(Gln) amidotransferase subunit B, organellar chromatophore (496 aa).

It belongs to the GatB/GatE family. GatB subfamily. In terms of assembly, subunit of the heterotrimeric GatCAB amidotransferase (AdT) complex, composed of A, B and C subunits.

The protein localises to the plastid. Its subcellular location is the organellar chromatophore. The catalysed reaction is L-glutamyl-tRNA(Gln) + L-glutamine + ATP + H2O = L-glutaminyl-tRNA(Gln) + L-glutamate + ADP + phosphate + H(+). Functionally, allows the formation of correctly charged Gln-tRNA(Gln) through the transamidation of misacylated Glu-tRNA(Gln). The reaction takes place in the presence of glutamine and ATP through an activated gamma-phospho-Glu-tRNA(Gln). In Paulinella chromatophora, this protein is Glutamyl-tRNA(Gln) amidotransferase subunit B, organellar chromatophore.